A 311-amino-acid polypeptide reads, in one-letter code: 3-dehydro-scyllo-inosose hydrolase (311 aa).

Residues Glu-35, His-37, Asp-46, His-117, and Glu-173 each contribute to the Zn(2+) site.

It belongs to the creatininase superfamily. As to quaternary structure, homotrimer. The cofactor is Zn(2+).

The enzyme catalyses 3-dehydro-scyllo-inosose + H2O = 5-dehydro-L-gluconate + H(+). It participates in polyol metabolism; myo-inositol metabolism. In terms of biological role, catalyzes the ring-opening hydrolysis of 3-dehydro-scyllo-inosose (diketo-inositol) to 5-dehydro-L-gluconate, and thus probably functions in a myo-inositol degradation pathway together with IolG, IolM and IolO. This is 3-dehydro-scyllo-inosose hydrolase from Thermotoga maritima (strain ATCC 43589 / DSM 3109 / JCM 10099 / NBRC 100826 / MSB8).